Here is a 1023-residue protein sequence, read N- to C-terminus: 1-phosphatidylinositol 4,5-bisphosphate phosphodiesterase beta-4 (1023 aa).

Residues 149 to 299 enclose the PI-PLC X-box domain; it reads QEMDHPLAHY…LKRKILIKKQ (151 aa). Active-site residues include His-164 and His-211. In terms of domain architecture, PI-PLC Y-box spans 413–529; the sequence is LSTMINYAQP…GYLLKPDFMR (117 aa). One can recognise a C2 domain in the interval 532 to 657; sequence DRTFDPFSET…SLRNEGNKPL (126 aa). Disordered regions lie at residues 711 to 742 and 930 to 958; these read ADVP…SELR and KISM…VREL. Composition is skewed to polar residues over residues 729 to 742 and 933 to 942; these read AKAN…SELR and MENSKAISQD. Thr-734 carries the post-translational modification Phosphothreonine. The segment covering 943–957 has biased composition (basic and acidic residues); that stretch reads KSIKNKAERERRVRE.

Ca(2+) is required as a cofactor. Post-translationally, the N-terminus is blocked. In terms of tissue distribution, preferentially expressed in the retina.

The protein localises to the cell membrane. The enzyme catalyses a 1,2-diacyl-sn-glycero-3-phospho-(1D-myo-inositol-4,5-bisphosphate) + H2O = 1D-myo-inositol 1,4,5-trisphosphate + a 1,2-diacyl-sn-glycerol + H(+). It catalyses the reaction a 1,2-diacyl-sn-glycero-3-phospho-(1D-myo-inositol) + H2O = 1D-myo-inositol 1-phosphate + a 1,2-diacyl-sn-glycerol + H(+). Its function is as follows. Activated phosphatidylinositol-specific phospholipase C enzymes catalyze the production of the second messenger molecules diacylglycerol (DAG) and inositol 1,4,5-trisphosphate (IP3) involved in G-protein coupled receptor signaling pathways. PLCB4 is a direct effector of the endothelin receptor signaling pathway that plays an essential role in lower jaw and middle ear structures development. This Bos taurus (Bovine) protein is 1-phosphatidylinositol 4,5-bisphosphate phosphodiesterase beta-4 (PLCB4).